Consider the following 206-residue polypeptide: 3-isopropylmalate dehydratase small subunit (206 aa).

Belongs to the LeuD family. LeuD type 1 subfamily. Heterodimer of LeuC and LeuD.

The catalysed reaction is (2R,3S)-3-isopropylmalate = (2S)-2-isopropylmalate. Its pathway is amino-acid biosynthesis; L-leucine biosynthesis; L-leucine from 3-methyl-2-oxobutanoate: step 2/4. Its function is as follows. Catalyzes the isomerization between 2-isopropylmalate and 3-isopropylmalate, via the formation of 2-isopropylmaleate. The polypeptide is 3-isopropylmalate dehydratase small subunit (Leptospira borgpetersenii serovar Hardjo-bovis (strain L550)).